The sequence spans 193 residues: Xanthine phosphoribosyltransferase (193 aa).

Residues Leu-20 and Thr-27 each coordinate xanthine. 128-132 (ANGQA) lines the 5-phospho-alpha-D-ribose 1-diphosphate pocket. Residue Lys-156 coordinates xanthine.

Belongs to the purine/pyrimidine phosphoribosyltransferase family. Xpt subfamily. In terms of assembly, homodimer.

Its subcellular location is the cytoplasm. It carries out the reaction XMP + diphosphate = xanthine + 5-phospho-alpha-D-ribose 1-diphosphate. Its pathway is purine metabolism; XMP biosynthesis via salvage pathway; XMP from xanthine: step 1/1. Converts the preformed base xanthine, a product of nucleic acid breakdown, to xanthosine 5'-monophosphate (XMP), so it can be reused for RNA or DNA synthesis. The protein is Xanthine phosphoribosyltransferase of Streptococcus pneumoniae serotype 2 (strain D39 / NCTC 7466).